A 364-amino-acid chain; its full sequence is Succinyl-diaminopimelate desuccinylase (364 aa).

His64 serves as a coordination point for Zn(2+). Asp66 is an active-site residue. Asp95 contributes to the Zn(2+) binding site. The active-site Proton acceptor is the Glu125. 3 residues coordinate Zn(2+): Glu126, Glu154, and His339.

Belongs to the peptidase M20A family. DapE subfamily. As to quaternary structure, homodimer. The cofactor is Zn(2+). Co(2+) is required as a cofactor.

It catalyses the reaction N-succinyl-(2S,6S)-2,6-diaminopimelate + H2O = (2S,6S)-2,6-diaminopimelate + succinate. It functions in the pathway amino-acid biosynthesis; L-lysine biosynthesis via DAP pathway; LL-2,6-diaminopimelate from (S)-tetrahydrodipicolinate (succinylase route): step 3/3. Catalyzes the hydrolysis of N-succinyl-L,L-diaminopimelic acid (SDAP), forming succinate and LL-2,6-diaminopimelate (DAP), an intermediate involved in the bacterial biosynthesis of lysine and meso-diaminopimelic acid, an essential component of bacterial cell walls. In Nitratiruptor sp. (strain SB155-2), this protein is Succinyl-diaminopimelate desuccinylase.